Here is a 1008-residue protein sequence, read N- to C-terminus: Serine/threonine-protein kinase PRP4 homolog (1008 aa).

The tract at residues 1-103 is disordered; that stretch reads MAAAEAPSLR…PAKRTKLDDL (103 aa). A2 carries the N-acetylalanine modification. S8, S20, S23, and S32 each carry phosphoserine. Basic residues-rich tracts occupy residues 39–59 and 67–81; these read KHSRHKKKKHKHRSKHKKHKH and RKHKHKHKHKKHKRK. Residues 82–91 show a composition bias toward basic and acidic residues; the sequence is EVADASDKEG. A phosphoserine mark is found at S87 and S93. An N6-acetyllysine; alternate modification is found at K99. K99 is covalently cross-linked (Glycyl lysine isopeptide (Lys-Gly) (interchain with G-Cter in SUMO2); alternate). Residue K111 forms a Glycyl lysine isopeptide (Lys-Gly) (interchain with G-Cter in SUMO2) linkage. A Glycyl lysine isopeptide (Lys-Gly) (interchain with G-Cter in SUMO2); alternate cross-link involves residue K117. K117 participates in a covalent cross-link: Glycyl lysine isopeptide (Lys-Gly) (interchain with G-Cter in SUMO1); alternate. S131 carries the post-translational modification Phosphoserine. Y140 is modified (phosphotyrosine). Disordered regions lie at residues 140-536 and 560-584; these read YESG…EDEE and SNLSVPSEPSSPQSSTRSRSPSPDD. A phosphoserine mark is found at S142, S144, and S166. Residues 157–168 show a composition bias toward low complexity; sequence GNRSSTRSSSTK. Residues K170 and K177 each participate in a glycyl lysine isopeptide (Lys-Gly) (interchain with G-Cter in SUMO2) cross-link. Composition is skewed to basic residues over residues 179–202 and 214–230; these read STKKRSKSRSKERTRHRSDKKKSK and RSKSKERKKSKSPSKRS. Phosphoserine occurs at positions 239, 241, 257, 277, 283, 292, and 294. The segment covering 247–270 has biased composition (basic and acidic residues); it reads RSQEKVGKARSPVDDKAKVEDKSK. Positions 302 to 315 are enriched in basic residues; sequence SKDRRSRSKERKSK. Over residues 316-325 the composition is skewed to basic and acidic residues; that stretch reads RPEADKEKKP. 5 positions are modified to phosphoserine: S328, S354, S356, S366, and S368. The span at 342-367 shows a compositional bias: basic residues; it reads PSRRPGRSPKRRSLSPKQRDKSRRSR. T385 is modified (phosphothreonine). Residue S387 is modified to Phosphoserine. Basic and acidic residues-rich tracts occupy residues 395–408 and 415–429; these read RSLERKRREPERRR and RPRDDILSRRERSKD. A phosphoserine mark is found at S427, S431, and S437. Residues 438–498 show a composition bias toward basic residues; it reads PARRRASRSP…RGGRRRRSRS (61 aa). Residues S519, S520, S521, S566, S570, S577, S579, and S581 each carry the phosphoserine modification. Residues 519-536 are compositionally biased toward acidic residues; sequence SSSDDNLEDFDVEEEDEE. Residues 563 to 582 show a composition bias toward low complexity; sequence SVPSEPSSPQSSTRSRSPSP. Residues K594 and K660 each participate in a glycyl lysine isopeptide (Lys-Gly) (interchain with G-Cter in SUMO2) cross-link. Positions 688–1004 constitute a Protein kinase domain; that stretch reads YNVYGYTGQG…INQALQHAFI (317 aa). Residues 694-702 and K718 each bind ATP; that span reads TGQGVFSNV. K718 carries the N6-acetyllysine modification. D816 acts as the Proton acceptor in catalysis. Residue Y850 is modified to Phosphotyrosine. At S853 the chain carries Phosphoserine.

The protein belongs to the protein kinase superfamily. CMGC Ser/Thr protein kinase family. As to quaternary structure, interacts with CLK1 C-terminus. Associates with the U5 snRNP and NCOR1 deacetylase complexes. Identified in the spliceosome C complex. In terms of processing, phosphorylated by CLK1. Autophosphorylated; phosphorylation inhibits interaction with its targets, such as PRPF6 or SMARCA4.

The protein localises to the nucleus. It localises to the chromosome. Its subcellular location is the centromere. It is found in the kinetochore. It catalyses the reaction L-seryl-[protein] + ATP = O-phospho-L-seryl-[protein] + ADP + H(+). The catalysed reaction is L-threonyl-[protein] + ATP = O-phospho-L-threonyl-[protein] + ADP + H(+). In terms of biological role, serine/threonine kinase involved in spliceosomal assembly as well as mitosis and signaling regulation. Connects chromatin mediated regulation of transcription and pre-mRNA splicing. During spliceosomal assembly, interacts with and phosphorylates PRPF6 and PRPF31, components of the U4/U6-U5 tri-small nuclear ribonucleoprotein (snRNP), to facilitate the formation of the spliceosome B complex. Plays a role in regulating transcription and the spindle assembly checkpoint (SAC). Associates with U5 snRNP and NCOR1 deacetylase complexes which may allow a coordination of pre-mRNA splicing with chromatin remodeling events involved in transcriptional regulation. Associates and probably phosphorylates SMARCA4 and NCOR1. Phosphorylates SRSF1. Associates with kinetochores during mitosis and is necessary for recruitment and maintenance of the checkpoint proteins such as MAD1L1 and MAD12L1 at the kinetochores. Phosphorylates and regulates the activity of the transcription factors such as ELK1 and KLF13. Phosphorylates nuclear YAP1 and WWTR1/TAZ which induces nuclear exclusion and regulates Hippo signaling pathway, involved in tissue growth control. This is Serine/threonine-protein kinase PRP4 homolog (PRP4K) from Bos taurus (Bovine).